Reading from the N-terminus, the 500-residue chain is Glucose-1-phosphate adenylyltransferase large subunit, chloroplastic/amyloplastic (500 aa).

A chloroplast-targeting transit peptide spans 1 to 33 (RASPPSESRAPLRAPQRSATRQHQARQGPRRMC). The disordered stretch occupies residues 1-47 (RASPPSESRAPLRAPQRSATRQHQARQGPRRMCNGGRGPPYWTAGVT).

It belongs to the bacterial/plant glucose-1-phosphate adenylyltransferase family. Heterotetramer.

Its subcellular location is the plastid. The protein localises to the chloroplast. The protein resides in the amyloplast. It catalyses the reaction alpha-D-glucose 1-phosphate + ATP + H(+) = ADP-alpha-D-glucose + diphosphate. The protein operates within glycan biosynthesis; starch biosynthesis. With respect to regulation, insensitive to 3'phosphoglycerate and orthophosphate. Its function is as follows. This protein plays a role in synthesis of starch. It catalyzes the synthesis of the activated glycosyl donor, ADP-glucose from Glc-1-P and ATP. The chain is Glucose-1-phosphate adenylyltransferase large subunit, chloroplastic/amyloplastic (AGA.7) from Triticum aestivum (Wheat).